A 223-amino-acid chain; its full sequence is Octanoyltransferase (223 aa).

The 186-residue stretch at 31–216 folds into the BPL/LPL catalytic domain; that stretch reads GQIGDTLLLL…QIGEVFALEP (186 aa). Residues 76-83, 145-147, and 159-161 each bind substrate; these read RGGEVTYH, AIG, and GLA. The active-site Acyl-thioester intermediate is Cys-177.

The protein belongs to the LipB family.

It is found in the cytoplasm. The catalysed reaction is octanoyl-[ACP] + L-lysyl-[protein] = N(6)-octanoyl-L-lysyl-[protein] + holo-[ACP] + H(+). The protein operates within protein modification; protein lipoylation via endogenous pathway; protein N(6)-(lipoyl)lysine from octanoyl-[acyl-carrier-protein]: step 1/2. Its function is as follows. Catalyzes the transfer of endogenously produced octanoic acid from octanoyl-acyl-carrier-protein onto the lipoyl domains of lipoate-dependent enzymes. Lipoyl-ACP can also act as a substrate although octanoyl-ACP is likely to be the physiological substrate. The protein is Octanoyltransferase of Chloroflexus aurantiacus (strain ATCC 29366 / DSM 635 / J-10-fl).